We begin with the raw amino-acid sequence, 190 residues long: MPTPTKGARLGGSPAHERLMLANLAMSLFQHGKIQTTETKARRLRPLAEQLITKAKRGDLASRRRVLGVVKDKDVVYTLFEQIAPRYANRNGGYTRIVKTGPRKGDAAPMAIIELVEELAVAQPKANKKTAGRKAAQQDKVEALAPAEETPAPTSGDQDAEAPVSVSGDTAAARADSDLAVEENNEQNKA.

A disordered region spans residues 128–190; it reads KKTAGRKAAQ…VEENNEQNKA (63 aa). Residues 143 to 154 show a composition bias toward low complexity; sequence ALAPAEETPAPT. Over residues 179–190 the composition is skewed to acidic residues; the sequence is LAVEENNEQNKA.

This sequence belongs to the bacterial ribosomal protein bL17 family. Part of the 50S ribosomal subunit. Contacts protein L32.

The protein is Large ribosomal subunit protein bL17 of Salinispora tropica (strain ATCC BAA-916 / DSM 44818 / JCM 13857 / NBRC 105044 / CNB-440).